A 398-amino-acid chain; its full sequence is Acetate kinase 1 (398 aa).

Asn9 is a binding site for Mg(2+). Residue Lys16 participates in ATP binding. Residue Arg89 coordinates substrate. The active-site Proton donor/acceptor is the Asp146. ATP-binding positions include 206–210 (HLGNG), 281–283 (DCR), and 329–333 (GIGEN). Position 384 (Glu384) interacts with Mg(2+).

It belongs to the acetokinase family. As to quaternary structure, homodimer. Mg(2+) serves as cofactor. Mn(2+) is required as a cofactor.

It is found in the cytoplasm. The catalysed reaction is acetate + ATP = acetyl phosphate + ADP. It participates in metabolic intermediate biosynthesis; acetyl-CoA biosynthesis; acetyl-CoA from acetate: step 1/2. Functionally, catalyzes the formation of acetyl phosphate from acetate and ATP. Can also catalyze the reverse reaction. This chain is Acetate kinase 1, found in Photobacterium profundum (strain SS9).